A 316-amino-acid polypeptide reads, in one-letter code: Cytochrome c biogenesis protein CcsA (316 aa).

The next 7 membrane-spanning stretches (helical) occupy residues phenylalanine 15–leucine 35, glycine 44–glycine 64, leucine 71–leucine 91, methionine 142–isoleucine 162, valine 220–asparagine 240, tryptophan 247–leucine 267, and alanine 281–leucine 301.

The protein belongs to the CcmF/CycK/Ccl1/NrfE/CcsA family. May interact with Ccs1.

The protein resides in the plastid. The protein localises to the chloroplast thylakoid membrane. In terms of biological role, required during biogenesis of c-type cytochromes (cytochrome c6 and cytochrome f) at the step of heme attachment. The chain is Cytochrome c biogenesis protein CcsA from Trachelium caeruleum (Blue throatwort).